The primary structure comprises 190 residues: Probable RNA-binding protein 18 (190 aa).

The RRM domain maps to 25–106; sequence HRLWIGNVDP…KKLVVRWAHA (82 aa).

The protein is Probable RNA-binding protein 18 (rbm18) of Xenopus laevis (African clawed frog).